Consider the following 256-residue polypeptide: uncharacterized protein (256 aa).

Residue 9–33 (VTGGGQGIGAAIAQLFAENGMKVVI) coordinates NADP(+). Serine 140 is a substrate binding site. The active-site Proton acceptor is tyrosine 153.

Belongs to the short-chain dehydrogenases/reductases (SDR) family.

This is an uncharacterized protein from Thermotoga maritima (strain ATCC 43589 / DSM 3109 / JCM 10099 / NBRC 100826 / MSB8).